Reading from the N-terminus, the 285-residue chain is NAD kinase (285 aa).

The active-site Proton acceptor is D76. NAD(+) is bound by residues 76–77 (DG), 151–152 (NE), H162, R179, D181, 192–197 (TAYSLS), and Q252.

This sequence belongs to the NAD kinase family. Requires a divalent metal cation as cofactor.

It is found in the cytoplasm. The enzyme catalyses NAD(+) + ATP = ADP + NADP(+) + H(+). Its function is as follows. Involved in the regulation of the intracellular balance of NAD and NADP, and is a key enzyme in the biosynthesis of NADP. Catalyzes specifically the phosphorylation on 2'-hydroxyl of the adenosine moiety of NAD to yield NADP. This is NAD kinase from Haemophilus influenzae (strain ATCC 51907 / DSM 11121 / KW20 / Rd).